Here is a 389-residue protein sequence, read N- to C-terminus: 8-amino-7-oxononanoate synthase (389 aa).

Arg-31 is a binding site for substrate. 109-110 (GY) contacts pyridoxal 5'-phosphate. His-134 lines the substrate pocket. Residues Ser-180, 205-208 (DEAH), and 236-239 (TLSK) each bind pyridoxal 5'-phosphate. Lys-239 carries the N6-(pyridoxal phosphate)lysine modification. A substrate-binding site is contributed by Thr-349.

Belongs to the class-II pyridoxal-phosphate-dependent aminotransferase family. BioF subfamily. Homodimer. It depends on pyridoxal 5'-phosphate as a cofactor.

It catalyses the reaction 6-carboxyhexanoyl-[ACP] + L-alanine + H(+) = (8S)-8-amino-7-oxononanoate + holo-[ACP] + CO2. It participates in cofactor biosynthesis; biotin biosynthesis. Functionally, catalyzes the decarboxylative condensation of pimeloyl-[acyl-carrier protein] and L-alanine to produce 8-amino-7-oxononanoate (AON), [acyl-carrier protein], and carbon dioxide. In Mycobacterium ulcerans (strain Agy99), this protein is 8-amino-7-oxononanoate synthase.